Reading from the N-terminus, the 691-residue chain is Elongation factor G (691 aa).

The region spanning 8 to 282 (ERVRNIGIAA…AVIDYLPAPI (275 aa)) is the tr-type G domain. GTP is bound by residues 17–24 (AHIDAGKT), 81–85 (DTPGH), and 135–138 (NKMD).

Belongs to the TRAFAC class translation factor GTPase superfamily. Classic translation factor GTPase family. EF-G/EF-2 subfamily.

It is found in the cytoplasm. Its function is as follows. Catalyzes the GTP-dependent ribosomal translocation step during translation elongation. During this step, the ribosome changes from the pre-translocational (PRE) to the post-translocational (POST) state as the newly formed A-site-bound peptidyl-tRNA and P-site-bound deacylated tRNA move to the P and E sites, respectively. Catalyzes the coordinated movement of the two tRNA molecules, the mRNA and conformational changes in the ribosome. The protein is Elongation factor G of Prochlorococcus marinus (strain SARG / CCMP1375 / SS120).